Consider the following 100-residue polypeptide: uncharacterized protein (100 aa).

2 helical membrane-spanning segments follow: residues 50–70 (LLIF…FSLF) and 75–95 (DVFL…SPEV).

It localises to the membrane. This is an uncharacterized protein from Saccharomyces cerevisiae (strain ATCC 204508 / S288c) (Baker's yeast).